The following is a 233-amino-acid chain: H-2 class II histocompatibility antigen, A-F alpha chain (233 aa).

Residues 1-88 (EDDIEADHVG…KRSNFTPATN (88 aa)) form an alpha-1 region. Residues 1 to 195 (EDDIEADHVG…IPAPMSELTE (195 aa)) are Extracellular-facing. Residues 89 to 182 (EAPQATVFPK…GLEEPVLKHW (94 aa)) are alpha-2. The Ig-like C1-type domain occupies 91-183 (PQATVFPKSP…LEEPVLKHWE (93 aa)). Cysteine 111 and cysteine 167 are joined by a disulfide. Asparagine 122 carries an N-linked (GlcNAc...) asparagine glycan. Residues 183-195 (EPEIPAPMSELTE) form a connecting peptide region. A helical membrane pass occupies residues 196–221 (TVVCALGLSVGLVGIVVGTIFIIQGL). At 222 to 233 (RSGGTSRHPGPL) the chain is on the cytoplasmic side.

It belongs to the MHC class II family.

Its subcellular location is the membrane. This is H-2 class II histocompatibility antigen, A-F alpha chain (H2-Aa) from Mus musculus (Mouse).